The following is a 169-amino-acid chain: MQNTIRIVGIDPGLRRTGWGIIDTLGNSLRFVASGTVTSDGDMDLASRLCQLHDGLAEVVHAYKPDEAAVEQTFVNKDAVATLKLGQARGIAMLVPARAGLHVSEYAPNAVKKAVIGVGHGEKHQIHMMLKILMPKVEFKGDDAADALAIAICHAHNRGSNRMRQALAG.

Active-site residues include Asp-11, Glu-71, and Asp-143. Positions 11, 71, and 143 each coordinate Mg(2+).

Belongs to the RuvC family. As to quaternary structure, homodimer which binds Holliday junction (HJ) DNA. The HJ becomes 2-fold symmetrical on binding to RuvC with unstacked arms; it has a different conformation from HJ DNA in complex with RuvA. In the full resolvosome a probable DNA-RuvA(4)-RuvB(12)-RuvC(2) complex forms which resolves the HJ. The cofactor is Mg(2+).

The protein resides in the cytoplasm. The enzyme catalyses Endonucleolytic cleavage at a junction such as a reciprocal single-stranded crossover between two homologous DNA duplexes (Holliday junction).. Its function is as follows. The RuvA-RuvB-RuvC complex processes Holliday junction (HJ) DNA during genetic recombination and DNA repair. Endonuclease that resolves HJ intermediates. Cleaves cruciform DNA by making single-stranded nicks across the HJ at symmetrical positions within the homologous arms, yielding a 5'-phosphate and a 3'-hydroxyl group; requires a central core of homology in the junction. The consensus cleavage sequence is 5'-(A/T)TT(C/G)-3'. Cleavage occurs on the 3'-side of the TT dinucleotide at the point of strand exchange. HJ branch migration catalyzed by RuvA-RuvB allows RuvC to scan DNA until it finds its consensus sequence, where it cleaves and resolves the cruciform DNA. This chain is Crossover junction endodeoxyribonuclease RuvC, found in Rhizobium etli (strain CIAT 652).